The sequence spans 258 residues: Acyl-[acyl-carrier-protein]--UDP-N-acetylglucosamine O-acyltransferase (258 aa).

This sequence belongs to the transferase hexapeptide repeat family. LpxA subfamily. In terms of assembly, homotrimer.

It is found in the cytoplasm. It catalyses the reaction a (3R)-hydroxyacyl-[ACP] + UDP-N-acetyl-alpha-D-glucosamine = a UDP-3-O-[(3R)-3-hydroxyacyl]-N-acetyl-alpha-D-glucosamine + holo-[ACP]. The protein operates within glycolipid biosynthesis; lipid IV(A) biosynthesis; lipid IV(A) from (3R)-3-hydroxytetradecanoyl-[acyl-carrier-protein] and UDP-N-acetyl-alpha-D-glucosamine: step 1/6. Functionally, involved in the biosynthesis of lipid A, a phosphorylated glycolipid that anchors the lipopolysaccharide to the outer membrane of the cell. In Pseudomonas syringae pv. syringae (strain B728a), this protein is Acyl-[acyl-carrier-protein]--UDP-N-acetylglucosamine O-acyltransferase.